Consider the following 274-residue polypeptide: MIHWEQSRTLLSFPQVGLHLSWYGIFFSLGIFLSSFAGIRLATVLCKDPNMRKELKTGLENFALGALLVIVIGARAFYVLFYGGSFYFENPSEIIKIWKGGLSSHGAIIALVIWSAAFSRFHIRRLPMLSVTYICDICGAVFGVAALLIRVGNFMNQEILGTPTSMPWGVVFANDSSLIARHPVQLYEGVSYLLLSLVLYWLCYRGSIRLGSGYSAAGALIGVASIRFCAEFFKTHQGSWLGEESLLTIGQWLSIPMVFLGIGILWIASKKREP.

The next 4 helical transmembrane spans lie at 16 to 36 (VGLHLSWYGIFFSLGIFLSSF), 62 to 82 (FALGALLVIVIGARAFYVLFY), 94 to 114 (IIKIWKGGLSSHGAIIALVIW), and 129 to 149 (LSVTYICDICGAVFGVAALLI). A 1,2-diacyl-sn-glycero-3-phospho-(1'-sn-glycerol) is bound at residue arginine 150. The next 3 membrane-spanning stretches (helical) occupy residues 184-204 (VQLYEGVSYLLLSLVLYWLCY), 213-233 (GYSAAGALIGVASIRFCAEFF), and 247-267 (LTIGQWLSIPMVFLGIGILWI).

Belongs to the Lgt family.

The protein localises to the cell inner membrane. The catalysed reaction is L-cysteinyl-[prolipoprotein] + a 1,2-diacyl-sn-glycero-3-phospho-(1'-sn-glycerol) = an S-1,2-diacyl-sn-glyceryl-L-cysteinyl-[prolipoprotein] + sn-glycerol 1-phosphate + H(+). Its pathway is protein modification; lipoprotein biosynthesis (diacylglyceryl transfer). Its function is as follows. Catalyzes the transfer of the diacylglyceryl group from phosphatidylglycerol to the sulfhydryl group of the N-terminal cysteine of a prolipoprotein, the first step in the formation of mature lipoproteins. The chain is Phosphatidylglycerol--prolipoprotein diacylglyceryl transferase from Chlamydia muridarum (strain MoPn / Nigg).